The sequence spans 287 residues: Melatonin receptor type 1B-A (287 aa).

Topologically, residues 1–28 (MPENVSLIRNRTEVGQGRAWGSGAGARP) are extracellular. 2 N-linked (GlcNAc...) asparagine glycosylation sites follow: Asn4 and Asn10. The helical transmembrane segment at 29-49 (AWVVMVLAGVLIFTSVVDVLG) threads the bilayer. Over 50–69 (NVLVIISVLRNRKLRNAGNA) the chain is Cytoplasmic. Residues 70-90 (FVVSLAFADLLVVCYPYPLVL) traverse the membrane as a helical segment. At 91–107 (HAMLHAGWLPGEMECKV) the chain is on the extracellular side. Residues Cys105 and Cys182 are joined by a disulfide bond. A helical membrane pass occupies residues 108–128 (SGFLMGASVIGSIFNITAIAI). Topologically, residues 129 to 149 (NRYCFICQANTYEKIYGRAGT) are cytoplasmic. A helical transmembrane segment spans residues 150 to 170 (LVLLTLVWVLTAIAILPNLSL). The Extracellular segment spans residues 171-192 (GSLTYDPRVYSCTFSQTTSAGY). The helical transmembrane segment at 193–213 (TIAVVTVHFLLPIAVVTFCYL) threads the bilayer. Over 214–245 (RIWVLVLRVRRRVTTDVRPRLRPSELRHFLTM) the chain is Cytoplasmic. The helical transmembrane segment at 246–266 (FVVFVLFAVCWAPLNLIGLAV) threads the bilayer. Over 267 to 275 (AVDPPRVGP) the chain is Extracellular. The chain crosses the membrane as a helical span at residues 276-287 (LVPDWLFVMSYF).

It belongs to the G-protein coupled receptor 1 family.

The protein resides in the cell membrane. High affinity receptor for melatonin. The activity of this receptor is mediated by pertussis toxin sensitive G proteins that inhibits adenylate cyclase activity. The sequence is that of Melatonin receptor type 1B-A (mtnr1ba) from Danio rerio (Zebrafish).